A 669-amino-acid polypeptide reads, in one-letter code: Heat shock 70 kDa protein BIP3 (669 aa).

Positions 1–32 are cleaved as a signal peptide; sequence MARGATWTRRLHLHGLFLAVLLLLTLPAGSTA. N423 carries an N-linked (GlcNAc...) asparagine glycan. The segment at 646-669 is disordered; that stretch reads AVYQRSGGSRRDGDGGGDDDHDEL. Over residues 660–669 the composition is skewed to acidic residues; the sequence is GGGDDDHDEL. The Prevents secretion from ER motif lies at 666–669; that stretch reads HDEL.

The protein belongs to the heat shock protein 70 family.

Its subcellular location is the endoplasmic reticulum. Functions as a chaperone during endoplasmic reticulum (ER) stress response. The protein is Heat shock 70 kDa protein BIP3 of Oryza sativa subsp. japonica (Rice).